The sequence spans 269 residues: Phosphate import ATP-binding protein PstB (269 aa).

The ABC transporter domain occupies leucine 14–asparagine 253. Glycine 46–serine 53 contributes to the ATP binding site.

Belongs to the ABC transporter superfamily. Phosphate importer (TC 3.A.1.7) family. As to quaternary structure, the complex is composed of two ATP-binding proteins (PstB), two transmembrane proteins (PstC and PstA) and a solute-binding protein (PstS).

Its subcellular location is the cell inner membrane. The catalysed reaction is phosphate(out) + ATP + H2O = ADP + 2 phosphate(in) + H(+). In terms of biological role, part of the ABC transporter complex PstSACB involved in phosphate import. Responsible for energy coupling to the transport system. The polypeptide is Phosphate import ATP-binding protein PstB (Prochlorococcus marinus (strain MIT 9312)).